The sequence spans 222 residues: uncharacterized protein (222 aa).

This is an uncharacterized protein from Klebsiella pneumoniae.